Here is a 688-residue protein sequence, read N- to C-terminus: Elongation factor G (688 aa).

Residues 8–282 enclose the tr-type G domain; sequence INFRNFGIMA…AVVDFLPSPV (275 aa). Residues 17–24, 81–85, and 135–138 each bind GTP; these read AHIDAGKT, DTPGH, and NKMD.

Belongs to the TRAFAC class translation factor GTPase superfamily. Classic translation factor GTPase family. EF-G/EF-2 subfamily.

The protein localises to the cytoplasm. Catalyzes the GTP-dependent ribosomal translocation step during translation elongation. During this step, the ribosome changes from the pre-translocational (PRE) to the post-translocational (POST) state as the newly formed A-site-bound peptidyl-tRNA and P-site-bound deacylated tRNA move to the P and E sites, respectively. Catalyzes the coordinated movement of the two tRNA molecules, the mRNA and conformational changes in the ribosome. The polypeptide is Elongation factor G (fusA) (Mycoplasma pneumoniae (strain ATCC 29342 / M129 / Subtype 1) (Mycoplasmoides pneumoniae)).